We begin with the raw amino-acid sequence, 394 residues long: E3 ubiquitin-protein ligase RNF149 (394 aa).

The first 31 residues, 1–31 (MAARRRPAAGVGARDALAVLALALCTPGVGG), serve as a signal peptide directing secretion. Residues asparagine 51 and asparagine 141 are each glycosylated (N-linked (GlcNAc...) asparagine). In terms of domain architecture, PA spans 66–171 (SSLREERQGL…PKGREIFDLV (106 aa)). The chain crosses the membrane as a helical span at residues 197–217 (VVFVAIAFITMMIISLAWLIF). Residues 265 to 306 (CAVCIENFKVKDVIRILPCKHIFHRICIDPWLLDHRTCPMCK) form an RING-type; atypical zinc finger. A disordered region spans residues 321–394 (DTQELPTPEA…SEPQHGGSIC (74 aa)). Threonine 327 is modified (phosphothreonine). An N-linked (GlcNAc...) asparagine glycan is attached at asparagine 339. Residues serine 341 and serine 344 each carry the phosphoserine modification. Residues 352–362 (SNLPSSSSSES) are compositionally biased toward low complexity.

The protein localises to the membrane. The enzyme catalyses S-ubiquitinyl-[E2 ubiquitin-conjugating enzyme]-L-cysteine + [acceptor protein]-L-lysine = [E2 ubiquitin-conjugating enzyme]-L-cysteine + N(6)-ubiquitinyl-[acceptor protein]-L-lysine.. It participates in protein modification; protein ubiquitination. E3 ubiquitin-protein ligase. Ubiquitinates BRAF, inducing its proteasomal degradation. The sequence is that of E3 ubiquitin-protein ligase RNF149 (Rnf149) from Mus musculus (Mouse).